A 300-amino-acid chain; its full sequence is NAD kinase (300 aa).

The active-site Proton acceptor is the D75. Residues D75–G76, N149–D150, R177, D179, T190–S195, A214, and Q248 each bind NAD(+).

The protein belongs to the NAD kinase family. A divalent metal cation serves as cofactor.

The protein localises to the cytoplasm. The enzyme catalyses NAD(+) + ATP = ADP + NADP(+) + H(+). Its function is as follows. Involved in the regulation of the intracellular balance of NAD and NADP, and is a key enzyme in the biosynthesis of NADP. Catalyzes specifically the phosphorylation on 2'-hydroxyl of the adenosine moiety of NAD to yield NADP. In Burkholderia orbicola (strain MC0-3), this protein is NAD kinase.